A 452-amino-acid chain; its full sequence is Chaperone SurA (452 aa).

The signal sequence occupies residues 1-28; that stretch reads MKKTLRFAAVVSSLAASAALLVAAPAAA. PpiC domains are found at residues 186–288 and 302–400; these read QQDL…RLVD and IVQT…QVLN.

Its subcellular location is the periplasm. It carries out the reaction [protein]-peptidylproline (omega=180) = [protein]-peptidylproline (omega=0). Chaperone involved in the correct folding and assembly of outer membrane proteins. Recognizes specific patterns of aromatic residues and the orientation of their side chains, which are found more frequently in integral outer membrane proteins. May act in both early periplasmic and late outer membrane-associated steps of protein maturation. This is Chaperone SurA from Burkholderia orbicola (strain AU 1054).